Reading from the N-terminus, the 196-residue chain is Shikimate kinase (196 aa).

Residue 21 to 26 (GTGKSR) coordinates ATP. Serine 25 is a Mg(2+) binding site. Aspartate 43, arginine 67, and glycine 89 together coordinate substrate. An ATP-binding site is contributed by arginine 126. Arginine 145 provides a ligand contact to substrate. Residue arginine 161 coordinates ATP.

It belongs to the shikimate kinase family. In terms of assembly, monomer. It depends on Mg(2+) as a cofactor.

It is found in the cytoplasm. It carries out the reaction shikimate + ATP = 3-phosphoshikimate + ADP + H(+). It functions in the pathway metabolic intermediate biosynthesis; chorismate biosynthesis; chorismate from D-erythrose 4-phosphate and phosphoenolpyruvate: step 5/7. Its function is as follows. Catalyzes the specific phosphorylation of the 3-hydroxyl group of shikimic acid using ATP as a cosubstrate. This chain is Shikimate kinase, found in Deinococcus radiodurans (strain ATCC 13939 / DSM 20539 / JCM 16871 / CCUG 27074 / LMG 4051 / NBRC 15346 / NCIMB 9279 / VKM B-1422 / R1).